Consider the following 425-residue polypeptide: Metalloprotease AF_0655 (425 aa).

The protein belongs to the peptidase U62 family.

In terms of biological role, probable metalloprotease. In Archaeoglobus fulgidus (strain ATCC 49558 / DSM 4304 / JCM 9628 / NBRC 100126 / VC-16), this protein is Metalloprotease AF_0655.